Consider the following 312-residue polypeptide: Apolipoprotein E (312 aa).

The N-terminal stretch at 1 to 18 (MKALWALLLVPLLTGCLA) is a signal peptide. Repeat copies occupy residues 72 to 93 (VLMEDTMTEVKAYKKELEEQLG), 94 to 115 (PVAEETRARLAKEVQAAQARLG), 116 to 137 (ADMEDLRNRLGQYRNEVNTMLG), 138 to 159 (QSTEELRSRLSTHLRKMRKRLM), 160 to 181 (RDADDLQKRLAVYKAGAQEGAE), 182 to 203 (RGVSAIRERLGPLVEQGRQRTA), 204 to 225 (NLGSGAAQPLRDRAQALSDRIR), and 226 to 247 (GRLEEVGNQARDRLEEVRDQME). An 8 X 22 AA approximate tandem repeats region spans residues 72–247 (VLMEDTMTEV…RLEEVRDQME (176 aa)). M135 carries the methionine sulfoxide modification. Position 139 is a phosphoserine (S139). The LDL and other lipoprotein receptors binding stretch occupies residues 150 to 160 (HLRKMRKRLMR). Residues 150–160 (HLRKMRKRLMR) are LDL receptor binding. A heparin-binding site is contributed by 154 to 157 (MRKR). Residues 202 to 282 (TANLGSGAAQ…GWFEPLVEDM (81 aa)) are lipid-binding and lipoprotein association. 221–228 (SDRIRGRL) serves as a coordination point for heparin. Residues 258–312 (QQIRLQAEVFQARLKGWFEPLVEDMQRQWANLMEKIQASVATNSIASTTVPLENQ) form a homooligomerization region. The specificity for association with VLDL stretch occupies residues 270–282 (RLKGWFEPLVEDM).

This sequence belongs to the apolipoprotein A1/A4/E family. As to quaternary structure, homotetramer. May interact with ABCA1; functionally associated with ABCA1 in the biogenesis of HDLs. May interact with APP/A4 amyloid-beta peptide; the interaction is extremely stable in vitro but its physiological significance is unclear. May interact with MAPT. May interact with MAP2. In the cerebrospinal fluid, interacts with secreted SORL1. Interacts with PMEL; this allows the loading of PMEL luminal fragment on ILVs to induce fibril nucleation. In terms of processing, APOE exists as multiple glycosylated and sialylated glycoforms within cells and in plasma. The extent of glycosylation and sialylation are tissue and context specific. Post-translationally, glycated in plasma VLDL. Phosphorylated by FAM20C in the extracellular medium.

The protein localises to the secreted. Its subcellular location is the extracellular space. It localises to the extracellular matrix. It is found in the extracellular vesicle. The protein resides in the endosome. The protein localises to the multivesicular body. Its function is as follows. APOE is an apolipoprotein, a protein associating with lipid particles, that mainly functions in lipoprotein-mediated lipid transport between organs via the plasma and interstitial fluids. APOE is a core component of plasma lipoproteins and is involved in their production, conversion and clearance. Apolipoproteins are amphipathic molecules that interact both with lipids of the lipoprotein particle core and the aqueous environment of the plasma. As such, APOE associates with chylomicrons, chylomicron remnants, very low density lipoproteins (VLDL) and intermediate density lipoproteins (IDL) but shows a preferential binding to high-density lipoproteins (HDL). It also binds a wide range of cellular receptors including the LDL receptor/LDLR, the LDL receptor-related proteins LRP1, LRP2 and LRP8 and the very low-density lipoprotein receptor/VLDLR that mediate the cellular uptake of the APOE-containing lipoprotein particles. Finally, APOE also has a heparin-binding activity and binds heparan-sulfate proteoglycans on the surface of cells, a property that supports the capture and the receptor-mediated uptake of APOE-containing lipoproteins by cells. A main function of APOE is to mediate lipoprotein clearance through the uptake of chylomicrons, VLDLs, and HDLs by hepatocytes. APOE is also involved in the biosynthesis by the liver of VLDLs as well as their uptake by peripheral tissues ensuring the delivery of triglycerides and energy storage in muscle, heart and adipose tissues. By participating in the lipoprotein-mediated distribution of lipids among tissues, APOE plays a critical role in plasma and tissues lipid homeostasis. APOE is also involved in two steps of reverse cholesterol transport, the HDLs-mediated transport of cholesterol from peripheral tissues to the liver, and thereby plays an important role in cholesterol homeostasis. First, it is functionally associated with ABCA1 in the biogenesis of HDLs in tissues. Second, it is enriched in circulating HDLs and mediates their uptake by hepatocytes. APOE also plays an important role in lipid transport in the central nervous system, regulating neuron survival and sprouting. In Rattus rattus (Black rat), this protein is Apolipoprotein E (Apoe).